Consider the following 412-residue polypeptide: Heme chaperone HemW (412 aa).

Residues 4 to 241 form the Radical SAM core domain; that stretch reads GTYLMPTAAY…RHGQEVLTQA (238 aa). Y13 serves as a coordination point for S-adenosyl-L-methionine. Residues C19, C23, and C26 each coordinate [2Fe-2S] cluster. S-adenosyl-L-methionine-binding positions include G72, 73-74, E105, Q132, R144, and D169; that span reads GT.

This sequence belongs to the anaerobic coproporphyrinogen-III oxidase family. HemW subfamily. Requires [4Fe-4S] cluster as cofactor.

The protein resides in the cytoplasm. Functionally, probably acts as a heme chaperone, transferring heme to an unknown acceptor. Binds one molecule of heme per monomer, possibly covalently. Binds 1 [2Fe-2S] cluster. Although this protein has sequence motifs typically found in proteins binding the [4Fe-4S]-AdoMet radical-SAM cluster and S-adenosylmethionine, spectroscopic evidence suggests that a [2Fe-2S] cluster is present; S-adenosylmethionine was not detected. Has no detectable coproporphyrinogen-III oxidase activity. This is Heme chaperone HemW from Synechocystis sp. (strain ATCC 27184 / PCC 6803 / Kazusa).